Here is a 441-residue protein sequence, read N- to C-terminus: uncharacterized protein (441 aa).

This is an uncharacterized protein from Ictalurid herpesvirus 1 (strain Auburn) (IcHV-1).